We begin with the raw amino-acid sequence, 102 residues long: MAGQKIRIRLKSYDHEVIDVSARKIVDTVTRAGATVVGPVPLPTEKNVYCVIRSPHKYKDSREHFEMRTHKRLIDIIDPTPKAVDSLMRLDLPADVNIEIKL.

Belongs to the universal ribosomal protein uS10 family. As to quaternary structure, part of the 30S ribosomal subunit.

Functionally, involved in the binding of tRNA to the ribosomes. This is Small ribosomal subunit protein uS10 from Micrococcus luteus (strain ATCC 4698 / DSM 20030 / JCM 1464 / CCM 169 / CCUG 5858 / IAM 1056 / NBRC 3333 / NCIMB 9278 / NCTC 2665 / VKM Ac-2230) (Micrococcus lysodeikticus).